A 572-amino-acid chain; its full sequence is MIKERVTPPFQASGGSGVVMAESHIISSEAPPKSNPGLNIRTNCRMILNLLREKDCSVTFSPEQPLTPVTDLAVGFSNLSTFSGETPKRCLDLSNLGDETAPLPTESPDRMSSGKLESPKTQFVQFDGLFTPDLAWKAKKCPKRNMNSVLPHLLCSTPSFKKASGGQRSLSNKENEGELFKNPNCKPVALLLPQEVVDSQLSPTPENKVDISLDEDCEMNILGSPISADPPCLDGAHDDIKMQNLDGFADFFSVDEEEMENPPGAVGNLSCSMAILLSGPLLNQDVEISNVNNISLNRSRLYRSPSMPEKLDRPMLKRPVRPLNSETPVRVKRRRSTSSPLQPEEENCQPQRRGTSLKKTLSLCDVDISSVLDEDCGHRQLIGDFSKVYALPTVTGRHQDLRYITGETLAALMHGDFNSLVEKFFIIDCRYPYEYDGGHIKSAFNLHRQDEVTDYFLQQPLTPLMAQKRLIIIFHCEFSSERGPKMCRSLREEDRASNDYPSLYYPELYLLKGGYKDFFPEYKELCEPQSYCPMHHQDFREDLLKFRTKCKTSVGDRKRREPEFRLTGQRLG.

Disordered stretches follow at residues 95-117 (NLGDETAPLPTESPDRMSSGKLE) and 304-354 (SPSM…QRRG). The Rhodanese domain maps to 420 to 527 (LVEKFFIIDC…FFPEYKELCE (108 aa)). C476 is an active-site residue.

This sequence belongs to the MPI phosphatase family.

It carries out the reaction O-phospho-L-tyrosyl-[protein] + H2O = L-tyrosyl-[protein] + phosphate. This protein functions as a dosage-dependent inducer in mitotic control. It is a tyrosine protein phosphatase required for progression of the cell cycle. It may directly dephosphorylate p34(cdc2) and activate the p34(cdc2) kinase activity. The chain is M-phase inducer phosphatase 3 (cdc25-3) from Xenopus laevis (African clawed frog).